We begin with the raw amino-acid sequence, 393 residues long: MTNSNRIKLTWISFLSYALTGALVIVTGMVMGNIADYFNLPVSSMSNTFTFLNAGILISIFLNAWLMEIVPLKTQLRFGFLLMVLAVAGLMFSHSLALFSAAMFILGVVSGITMSIGTFLVTQMYEGRQRGSRLLFTDSFFSMAGMIFPMIAAFLLARSIEWYWVYACIGLVYVAIFILTFGCEFPALGKHAPKTDAPVEKEKWGIGVLFLSVAALCYILGQLGFISWVPEYAKGLGMSLNDAGTLVSNFWMSYMVGMWAFSFILRFFDLQRILTVLAGLAAILMYVFNTGTPAHMAWSILALGFFSSAIYTTIITLGSQQTKVPSPKLVNFVLTCGTIGTMLTFVVTGPIVEHSGPQAALLTANGLYAVVFVMCFLLGFVSRHRQHNTLTSH.

12 helical membrane-spanning segments follow: residues 11–31 (WISFLSYALTGALVIVTGMVM), 51–71 (FLNAGILISIFLNAWLMEIVP), 78–98 (FGFLLMVLAVAGLMFSHSLAL), 101–121 (AAMFILGVVSGITMSIGTFLV), 134–154 (LLFTDSFFSMAGMIFPMIAAF), 162–182 (WYWVYACIGLVYVAIFILTFG), 206–226 (IGVLFLSVAALCYILGQLGFI), 245–265 (TLVSNFWMSYMVGMWAFSFIL), 273–293 (ILTVLAGLAAILMYVFNTGTP), 297–317 (AWSILALGFFSSAIYTTIITL), 332–352 (FVLTCGTIGTMLTFVVTGPIV), and 361–381 (LLTANGLYAVVFVMCFLLGFV).

The protein belongs to the major facilitator superfamily. TsgA family.

It localises to the cell inner membrane. The polypeptide is Protein TsgA (Escherichia coli O139:H28 (strain E24377A / ETEC)).